Consider the following 293-residue polypeptide: ATP phosphoribosyltransferase (293 aa).

This sequence belongs to the ATP phosphoribosyltransferase family. Long subfamily. It depends on Mg(2+) as a cofactor.

The protein localises to the cytoplasm. It carries out the reaction 1-(5-phospho-beta-D-ribosyl)-ATP + diphosphate = 5-phospho-alpha-D-ribose 1-diphosphate + ATP. It functions in the pathway amino-acid biosynthesis; L-histidine biosynthesis; L-histidine from 5-phospho-alpha-D-ribose 1-diphosphate: step 1/9. Its activity is regulated as follows. Feedback inhibited by histidine. In terms of biological role, catalyzes the condensation of ATP and 5-phosphoribose 1-diphosphate to form N'-(5'-phosphoribosyl)-ATP (PR-ATP). Has a crucial role in the pathway because the rate of histidine biosynthesis seems to be controlled primarily by regulation of HisG enzymatic activity. This chain is ATP phosphoribosyltransferase, found in Solidesulfovibrio magneticus (strain ATCC 700980 / DSM 13731 / RS-1) (Desulfovibrio magneticus).